The primary structure comprises 210 residues: Putative 3-methyladenine DNA glycosylase (210 aa).

The disordered stretch occupies residues Ser-180 to Pro-210. Residues Ala-186–Ala-196 show a composition bias toward low complexity. Positions Arg-201 to Pro-210 are enriched in basic residues.

Belongs to the DNA glycosylase MPG family.

This chain is Putative 3-methyladenine DNA glycosylase, found in Anaeromyxobacter dehalogenans (strain 2CP-1 / ATCC BAA-258).